The chain runs to 254 residues: Imidazole glycerol phosphate synthase subunit HisF (254 aa).

Residues aspartate 11 and aspartate 130 contribute to the active site.

It belongs to the HisA/HisF family. In terms of assembly, heterodimer of HisH and HisF.

The protein localises to the cytoplasm. The enzyme catalyses 5-[(5-phospho-1-deoxy-D-ribulos-1-ylimino)methylamino]-1-(5-phospho-beta-D-ribosyl)imidazole-4-carboxamide + L-glutamine = D-erythro-1-(imidazol-4-yl)glycerol 3-phosphate + 5-amino-1-(5-phospho-beta-D-ribosyl)imidazole-4-carboxamide + L-glutamate + H(+). Its pathway is amino-acid biosynthesis; L-histidine biosynthesis; L-histidine from 5-phospho-alpha-D-ribose 1-diphosphate: step 5/9. Functionally, IGPS catalyzes the conversion of PRFAR and glutamine to IGP, AICAR and glutamate. The HisF subunit catalyzes the cyclization activity that produces IGP and AICAR from PRFAR using the ammonia provided by the HisH subunit. This Laribacter hongkongensis (strain HLHK9) protein is Imidazole glycerol phosphate synthase subunit HisF.